We begin with the raw amino-acid sequence, 454 residues long: GTPase Der (454 aa).

EngA-type G domains are found at residues 4–167 (AIVA…SEDK) and 188–363 (LELA…ASWQ). GTP contacts are provided by residues 10 to 17 (GKPNVGKS), 56 to 60 (DTPGL), 121 to 124 (NKTE), 194 to 201 (GRPNCGKS), 241 to 245 (DTAGV), and 306 to 309 (NKWD). The KH-like domain occupies 364-450 (KRVTTGTLNQ…PVRLSFVKGK (87 aa)).

This sequence belongs to the TRAFAC class TrmE-Era-EngA-EngB-Septin-like GTPase superfamily. EngA (Der) GTPase family. Associates with the 50S ribosomal subunit.

In terms of biological role, GTPase that plays an essential role in the late steps of ribosome biogenesis. This is GTPase Der from Orientia tsutsugamushi (strain Ikeda) (Rickettsia tsutsugamushi).